We begin with the raw amino-acid sequence, 185 residues long: Thymidine kinase (185 aa).

17–24 (GPMFAGKT) contacts ATP. The active-site Proton acceptor is the E92. F121 contributes to the substrate binding site. C146 and C149 together coordinate Zn(2+). 166–170 (LILAG) is a binding site for substrate. Zn(2+) contacts are provided by C179 and C182.

Belongs to the thymidine kinase family.

It carries out the reaction thymidine + ATP = dTMP + ADP + H(+). Functionally, phosphorylates thymidine. ASFV replicates in the cytoplasm of infected cells and contains genes encoding a number of enzymes needed for DNA synthesis, including thymidine kinase. Important for growth in swine macrophages in vitro and is a virus virulence factor in swine. This is Thymidine kinase from African swine fever virus (isolate Pig/Kenya/KEN-50/1950) (ASFV).